A 361-amino-acid chain; its full sequence is Replication-associated protein (361 aa).

Positions 8–116 (RVQSKNYFLT…DGDTIEWGDF (109 aa)) constitute a CRESS-DNA virus Rep endonuclease domain. The RCR-1 motif lies at 15-18 (FLTY). E49, H57, and H59 together coordinate a divalent metal cation. The short motif at 57–59 (HLH) is the RCR-2 element. Y103 acts as the For DNA cleavage activity in catalysis. An RCR-3 motif is present at residues 103–106 (YIDK). Residue D107 coordinates a divalent metal cation. The segment at 143–153 (VQSALAVLREE) is binding to RBR1. The interval 156 to 176 (KDFVLQNHNIRSNLERIFAKA) is oligomerization. Position 222–229 (222–229 (GDSRTGKT)) interacts with ATP.

This sequence belongs to the geminiviridae Rep protein family. Homooligomer. Interacts with the replication enhancer. protein (REn). Interacts with host retinoblastoma-related protein 1 (RBR1), and may thereby induce the transcription of host replicative enzymes even if the cell is not dividing anymore. Interacts with host PCNA. Interacts with host SCE1 protein. Mg(2+) serves as cofactor. Mn(2+) is required as a cofactor.

Its subcellular location is the host nucleus. Essential for the replication of viral ssDNA. The closed circular ssDNA genome is first converted to a superhelical dsDNA. Rep binds a specific region at the genome origin of replication. It introduces an endonucleolytic nick within the conserved sequence 5'-TAATATTAC-3' in the intergenic region of the genome present in all geminiviruses, thereby initiating the rolling circle replication (RCR). Following cleavage, binds covalently to the 5'-phosphate of DNA as a tyrosyl ester. The cleavage gives rise to a free 3'-OH that serves as a primer for the cellular DNA polymerase. The polymerase synthesizes the (+) strand DNA by rolling circle mechanism. After one round of replication, a Rep-catalyzed nucleotidyl transfer reaction releases a circular single-stranded virus genome, thereby terminating the replication. Displays origin-specific DNA cleavage, nucleotidyl transferase, ATPase and helicase activities. The polypeptide is Replication-associated protein (Nicotiana tabacum (Common tobacco)).